The chain runs to 435 residues: 3-phosphoshikimate 1-carboxyvinyltransferase (435 aa).

3-phosphoshikimate contacts are provided by Lys22, Ser23, and Arg27. Residue Lys22 coordinates phosphoenolpyruvate. Positions 94 and 122 each coordinate phosphoenolpyruvate. Residues Ser166, Gln168, Asp314, and Lys341 each contribute to the 3-phosphoshikimate site. A phosphoenolpyruvate-binding site is contributed by Gln168. Asp314 functions as the Proton acceptor in the catalytic mechanism. Phosphoenolpyruvate contacts are provided by Arg345 and Arg388.

It belongs to the EPSP synthase family. As to quaternary structure, monomer.

It is found in the cytoplasm. It catalyses the reaction 3-phosphoshikimate + phosphoenolpyruvate = 5-O-(1-carboxyvinyl)-3-phosphoshikimate + phosphate. It functions in the pathway metabolic intermediate biosynthesis; chorismate biosynthesis; chorismate from D-erythrose 4-phosphate and phosphoenolpyruvate: step 6/7. Functionally, catalyzes the transfer of the enolpyruvyl moiety of phosphoenolpyruvate (PEP) to the 5-hydroxyl of shikimate-3-phosphate (S3P) to produce enolpyruvyl shikimate-3-phosphate and inorganic phosphate. The polypeptide is 3-phosphoshikimate 1-carboxyvinyltransferase (Vesicomyosocius okutanii subsp. Calyptogena okutanii (strain HA)).